The sequence spans 106 residues: Movement protein TGB2 (106 aa).

Residues 1–8 (MPLTPPPD) are Cytoplasmic-facing. A helical membrane pass occupies residues 9–29 (YTRVYTALAIGASIAFFTGLI). The Lumenal portion of the chain corresponds to 30 to 73 (TRNTLPSVGDLQHNLPHGGRYRDGTKSVEYCGPRKLNSVESGSR). Residues 74–94 (WTFQPWLLVIVLVALIIALGR) form a helical membrane-spanning segment. Residues 95–106 (QGHNCRACGRSH) are Cytoplasmic-facing.

This sequence belongs to the Tymovirales TGBp2 protein family.

It is found in the host endoplasmic reticulum membrane. Its function is as follows. Plays a role in viral cell-to-cell propagation, by facilitating genome transport to neighboring plant cells through plasmosdesmata,. In Lilium (LSV), this protein is Movement protein TGB2.